Consider the following 736-residue polypeptide: Acyl-coenzyme A oxidase (736 aa).

This sequence belongs to the acyl-CoA oxidase family. Requires FAD as cofactor.

The protein localises to the peroxisome. It carries out the reaction a 2,3-saturated acyl-CoA + O2 = a (2E)-enoyl-CoA + H2O2. The protein operates within lipid metabolism; peroxisomal fatty acid beta-oxidation. The polypeptide is Acyl-coenzyme A oxidase (POX1) (Kluyveromyces lactis (strain ATCC 8585 / CBS 2359 / DSM 70799 / NBRC 1267 / NRRL Y-1140 / WM37) (Yeast)).